Here is a 342-residue protein sequence, read N- to C-terminus: Tryptophan--tRNA ligase (342 aa).

ATP contacts are provided by residues glutamine 19–serine 21 and glycine 27–asparagine 28. The 'HIGH' region motif lies at proline 20–asparagine 28. L-tryptophan is bound at residue aspartate 143. Residues glycine 155 to aspartate 157, valine 194, and lysine 203 to serine 207 each bind ATP. Positions lysine 203–serine 207 match the 'KMSKS' region motif.

Belongs to the class-I aminoacyl-tRNA synthetase family. As to quaternary structure, homodimer.

The protein localises to the cytoplasm. It catalyses the reaction tRNA(Trp) + L-tryptophan + ATP = L-tryptophyl-tRNA(Trp) + AMP + diphosphate + H(+). Its function is as follows. Catalyzes the attachment of tryptophan to tRNA(Trp). The protein is Tryptophan--tRNA ligase of Yersinia pestis.